Consider the following 252-residue polypeptide: Ciliogenesis and planar polarity effector 2 (252 aa).

Residues Q46 to V252 are small GTPase-like. GTP-binding positions include T62 to S67 and T173 to D176.

It belongs to the small GTPase superfamily. Rab family.

It is found in the cytoplasm. Its subcellular location is the cytoskeleton. The protein localises to the cilium basal body. In terms of biological role, potential effector of the planar cell polarity signaling pathway. Plays a role in targeted membrane trafficking most probably at the level of vesicle fusion with membranes. Involved in cilium biogenesis by regulating the transport of cargo proteins to the basal body and to the apical tips of cilia. More generally involved in exocytosis in secretory cells. The protein is Ciliogenesis and planar polarity effector 2 (cplane2) of Danio rerio (Zebrafish).